The primary structure comprises 450 residues: Tubulin beta chain (450 aa).

GTP is bound by residues E69, S138, G142, T143, G144, N204, and N226. E69 is a Mg(2+) binding site. The tract at residues 427–450 is disordered; it reads DATIDQEFEDEEEVEEQNDDSDEQ. Residues 430 to 450 are compositionally biased toward acidic residues; the sequence is IDQEFEDEEEVEEQNDDSDEQ.

Belongs to the tubulin family. As to quaternary structure, dimer of alpha and beta chains. A typical microtubule is a hollow water-filled tube with an outer diameter of 25 nm and an inner diameter of 15 nM. Alpha-beta heterodimers associate head-to-tail to form protofilaments running lengthwise along the microtubule wall with the beta-tubulin subunit facing the microtubule plus end conferring a structural polarity. Microtubules usually have 13 protofilaments but different protofilament numbers can be found in some organisms and specialized cells. Mg(2+) is required as a cofactor.

The protein resides in the cytoplasm. The protein localises to the cytoskeleton. Functionally, tubulin is the major constituent of microtubules, a cylinder consisting of laterally associated linear protofilaments composed of alpha- and beta-tubulin heterodimers. Microtubules grow by the addition of GTP-tubulin dimers to the microtubule end, where a stabilizing cap forms. Below the cap, tubulin dimers are in GDP-bound state, owing to GTPase activity of alpha-tubulin. The polypeptide is Tubulin beta chain (Bombyx mori (Silk moth)).